The following is a 374-amino-acid chain: Resuscitation-promoting factor Rpf2 (374 aa).

The first 40 residues, M1 to A40, serve as a signal peptide directing secretion. The 81-residue stretch at I210–T290 folds into the G5 domain. The segment at P228 to K252 is disordered.

The protein belongs to the transglycosylase family. Rpf subfamily. Post-translationally, glycosylated; by Pmt, by at least mannose and galactose. Other unidentified sugars may also be present. May be subject to proteolytic cleavage as multiple shorter forms are detected in gels. In terms of processing, at least 3 non-glycosylated protein isoforms of 35, 40 and 42 kDa are seen in gels.

The protein localises to the secreted. The protein resides in the cell surface. Functionally, factor that stimulates resuscitation of dormant cells. Has peptidoglycan (PG) hydrolytic activity. Active in the pM concentration range. Has little to no effect on actively-growing cells. PG fragments could either directly activate the resuscitation pathway of dormant bacteria or serve as a substrate for endogenous Rpf, resulting in low molecular weight products with resuscitation activity. In Corynebacterium glutamicum (strain ATCC 13032 / DSM 20300 / JCM 1318 / BCRC 11384 / CCUG 27702 / LMG 3730 / NBRC 12168 / NCIMB 10025 / NRRL B-2784 / 534), this protein is Resuscitation-promoting factor Rpf2 (rpf2).